We begin with the raw amino-acid sequence, 163 residues long: Cytochrome c-type biogenesis protein CcmE (163 aa).

Over 1-8 (MNPRRKKR) the chain is Cytoplasmic. The helical; Signal-anchor for type II membrane protein transmembrane segment at 9 to 29 (LTIILAISAGLAAVIGLVLYA) threads the bilayer. At 30 to 163 (LSQNIDLFYT…TEAQLKGSKQ (134 aa)) the chain is on the periplasmic side. Heme-binding residues include histidine 131 and tyrosine 135.

This sequence belongs to the CcmE/CycJ family.

The protein localises to the cell inner membrane. Its function is as follows. Heme chaperone required for the biogenesis of c-type cytochromes. Transiently binds heme delivered by CcmC and transfers the heme to apo-cytochromes in a process facilitated by CcmF and CcmH. The sequence is that of Cytochrome c-type biogenesis protein CcmE from Aeromonas hydrophila subsp. hydrophila (strain ATCC 7966 / DSM 30187 / BCRC 13018 / CCUG 14551 / JCM 1027 / KCTC 2358 / NCIMB 9240 / NCTC 8049).